The chain runs to 431 residues: Peroxisomal biogenesis factor 3 (431 aa).

The Peroxisomal portion of the chain corresponds to 1–10 (MDFFRRHQKK). A helical membrane pass occupies residues 11–28 (VLALVGVALSSYLFIDYV). Over 29-431 (KKKFFEIQGR…VVYSSFDWAL (403 aa)) the chain is Cytoplasmic. A disordered region spans residues 95 to 126 (TDRVLALESSTSSSATAQTVPTMTSGATEEGE). A compositionally biased stretch (polar residues) spans 112 to 121 (QTVPTMTSGA).

This sequence belongs to the peroxin-3 family.

It is found in the peroxisome membrane. Its function is as follows. Involved in peroxisome biosynthesis. Seems to directly or indirectly sequesters components of the peroxisome biogenesis machinery. This chain is Peroxisomal biogenesis factor 3 (PEX3), found in Yarrowia lipolytica (strain CLIB 122 / E 150) (Yeast).